Reading from the N-terminus, the 93-residue chain is Small ribosomal subunit protein uS19 (93 aa).

The protein belongs to the universal ribosomal protein uS19 family.

Functionally, protein S19 forms a complex with S13 that binds strongly to the 16S ribosomal RNA. The polypeptide is Small ribosomal subunit protein uS19 (Dehalococcoides mccartyi (strain ATCC BAA-2100 / JCM 16839 / KCTC 5957 / BAV1)).